The primary structure comprises 490 residues: Beta-glucosidase 42 (490 aa).

Residues Gln-35, His-137, 182 to 183 (NE), Tyr-317, and Glu-388 each bind a beta-D-glucoside. Glu-183 (proton donor) is an active-site residue. Glu-388 functions as the Nucleophile in the catalytic mechanism. N-linked (GlcNAc...) asparagine glycosylation occurs at Asn-420. A beta-D-glucoside contacts are provided by residues Trp-437, 444–445 (EW), and Phe-453.

The protein belongs to the glycosyl hydrolase 1 family. As to expression, expressed at low levels predominantly in root epidermal cells.

It carries out the reaction Hydrolysis of terminal, non-reducing beta-D-glucosyl residues with release of beta-D-glucose.. Glucosidase that hydrolyzes scopolin and various beta-glucosides, cellooligosaccharides (mainly cellotriose) and laminarioligosaccharides. Can use p-nitrophenyl-beta-glucosides (pNP beta-Glc) and p-nitrophenyl-beta-D-fucosides (pNP beta-D-Fuc) as substrates, and, to a lower extent, beta-galactosides, beta-mannosides and beta-xylosides. Involved in the secretion of root-derived phenolics upon iron ions (Fe) depletion. Promotes disease resistance toward B.cinerea, H.arabidopsidis and P.syringae pv. tomato DC3000. Required during rhizobacteria-mediated (e.g. P.fluorescens WCS417r) broad-spectrum induced systemic resistance (ISR) against several pathogens. This is Beta-glucosidase 42 from Arabidopsis thaliana (Mouse-ear cress).